A 176-amino-acid polypeptide reads, in one-letter code: Cytochrome b (176 aa).

3 consecutive transmembrane segments (helical) span residues 33-53 (FGSL…FLAM), 77-98 (WLLR…YLHV), and 113-133 (WNMG…GYVL). The heme b site is built by H83 and H97.

Belongs to the cytochrome b family. In terms of assembly, the cytochrome bc1 complex contains 11 subunits: 3 respiratory subunits (MT-CYB, CYC1 and UQCRFS1), 2 core proteins (UQCRC1 and UQCRC2) and 6 low-molecular weight proteins (UQCRH/QCR6, UQCRB/QCR7, UQCRQ/QCR8, UQCR10/QCR9, UQCR11/QCR10 and a cleavage product of UQCRFS1). This cytochrome bc1 complex then forms a dimer. It depends on heme b as a cofactor.

It localises to the mitochondrion inner membrane. Its function is as follows. Component of the ubiquinol-cytochrome c reductase complex (complex III or cytochrome b-c1 complex) that is part of the mitochondrial respiratory chain. The b-c1 complex mediates electron transfer from ubiquinol to cytochrome c. Contributes to the generation of a proton gradient across the mitochondrial membrane that is then used for ATP synthesis. The chain is Cytochrome b (MT-CYB) from Tomopeas ravum (Blunt-eared bat).